The sequence spans 166 residues: Ribosome biogenesis regulatory protein homolog (166 aa).

Phosphoserine is present on residues Ser-34 and Ser-64. Residues 144–166 form a disordered region; sequence KEKKLTSKQVRNTSKKIKRSRRH. Positions 156 to 166 are enriched in basic residues; it reads TSKKIKRSRRH.

It belongs to the RRS1 family. As to quaternary structure, component of a hexameric 5S RNP precursor complex, composed of 5S RNA, rrs1, rpf2, rpl5a/rpl5b, rpl11a/rpl11b and syo1; this complex acts as a precursor for ribosome assembly. Interacts with sad1.

The protein localises to the nucleus. It localises to the nucleolus. Functionally, involved in ribosomal large subunit assembly. The chain is Ribosome biogenesis regulatory protein homolog from Schizosaccharomyces pombe (strain 972 / ATCC 24843) (Fission yeast).